A 341-amino-acid chain; its full sequence is MATIKDVAKRANVSTTTVSHVINKTRFVAEETRNAVWTAIKELHYSPSAVARSLKVNHTKSIGLLATSSEAAYFAEIIEAVEKNCFQKGYTLILGNAWNNLEKQRAYLSMMAQKRVDGLLVMCSEYPEPLLSMLEEYRHIPMVVMDWGEAKADFTDTVIDNAFAGGYMAGRYLVERGHRDIGVIPGPLERNTGAGRLAGFMKAMEEALINVPDNWIVQGDFEPESGYHAMQQILSQSHRPTAVFCGGDIMAMGALCAADEMGLRVPQDVSVIGYDNVRNARYFTPALTTIHQPKDSLGETAFNMLLDRIVNKREESQSIEVHPRLVERRSVADGPFRDYRR.

Positions 2–56 (ATIKDVAKRANVSTTTVSHVINKTRFVAEETRNAVWTAIKELHYSPSAVARSLKV) constitute an HTH lacI-type domain. The segment at residues 4-23 (IKDVAKRANVSTTTVSHVIN) is a DNA-binding region (H-T-H motif). The DNA-binding element occupies 48-56 (SAVARSLKV). Residues Y73, R190, T192, F221, and D275 each contribute to the hypoxanthine site.

As to quaternary structure, homodimer.

The protein operates within purine metabolism; purine nucleotide biosynthesis [regulation]. Its function is as follows. Is the main repressor of the genes involved in the de novo synthesis of purine nucleotides, regulating purB, purC, purEK, purF, purHD, purL, purMN and guaBA expression. PurR is allosterically activated to bind its cognate DNA by binding the purine corepressors, hypoxanthine or guanine, thereby effecting transcription repression. In Salmonella paratyphi A (strain ATCC 9150 / SARB42), this protein is HTH-type transcriptional repressor PurR.